A 441-amino-acid chain; its full sequence is Probable D-serine dehydratase (441 aa).

Lysine 115 carries the post-translational modification N6-(pyridoxal phosphate)lysine.

It belongs to the serine/threonine dehydratase family. DsdA subfamily. Pyridoxal 5'-phosphate is required as a cofactor.

It carries out the reaction D-serine = pyruvate + NH4(+). This is Probable D-serine dehydratase from Fusobacterium nucleatum subsp. nucleatum (strain ATCC 25586 / DSM 15643 / BCRC 10681 / CIP 101130 / JCM 8532 / KCTC 2640 / LMG 13131 / VPI 4355).